Consider the following 200-residue polypeptide: Protein Mbur_1344 (200 aa).

In terms of domain architecture, AMMECR1 spans 5 to 192; the sequence is SEGEQTVRLA…EVEPRGDIEE (188 aa).

This Methanococcoides burtonii (strain DSM 6242 / NBRC 107633 / OCM 468 / ACE-M) protein is Protein Mbur_1344.